Consider the following 811-residue polypeptide: Potassium transporter 7 (811 aa).

At 1 to 52 (MPSYQYLLSLLFYILDCTDRFSVIVTIHNHRVGVLMIVLLQDQWKSYCRTIS) the chain is on the cytoplasmic side. The helical transmembrane segment at 53 to 73 (LLAFQSFGVVYGDLSTSPLYV) threads the bilayer. Topologically, residues 74–93 (YKSAFSGRLNNYRDETTIFG) are extracellular. Residues 94–114 (LFSLIFWTLTLLPLLKYVIIV) form a helical membrane-spanning segment. The Cytoplasmic segment spans residues 115 to 181 (LNADDNGEGG…EKHRKLRTCL (67 aa)). Residues 182–202 (LLFVLFGACMVIGDGVFTPAI) form a helical membrane-spanning segment. The Extracellular segment spans residues 203–217 (SVLSAISGLKDPGPG). The helical transmembrane segment at 218 to 238 (GIPDGWVVFIACIVLVGLFAL) threads the bilayer. The Cytoplasmic segment spans residues 239–245 (QHRGTHR). The helical transmembrane segment at 246-266 (VAFMFAPIVVVWLLSIGVIGL) threads the bilayer. Over 267–296 (YNIIHWNHRIFLALSPHYVIKFFKMTGKDG) the chain is Extracellular. The helical transmembrane segment at 297–317 (WLSLGGVLLAITGTEAMFADL) threads the bilayer. At 318-326 (GHFTAASIR) the chain is on the cytoplasmic side. The chain crosses the membrane as a helical span at residues 327 to 347 (LAFVGAIYPCLVLQYMGQAAF). Over 348 to 366 (LSRNMSAVEDSFYQSVPRS) the chain is Extracellular. Residue asparagine 351 is glycosylated (N-linked (GlcNAc...) asparagine). The helical transmembrane segment at 367 to 387 (LFWPVFVIATLAAVVGSQSII) threads the bilayer. At 388–418 (SATFSIVKQCLSLGCFPRVKVVHTSRWIHGQ) the chain is on the cytoplasmic side. A helical transmembrane segment spans residues 419–439 (IYIPEINWILMVLCLAVTLGF). Topologically, residues 440 to 450 (RDTTVIGNAYG) are extracellular. The helical transmembrane segment at 451–471 (LACIVVMFVTTWLMALVIIFV) threads the bilayer. Over 472-475 (WQKN) the chain is Cytoplasmic. Residues 476 to 496 (ILLALLFVVAFGSIEVVYLSA) form a helical membrane-spanning segment. Residues 497–503 (AVTKVPQ) lie on the Extracellular side of the membrane. Residues 504–524 (GGWAPIVFAFVFMLVMYVWHY) traverse the membrane as a helical segment. At 525-811 (GSRRKYLFDL…LVEVGMIYYV (287 aa)) the chain is on the cytoplasmic side. The disordered stretch occupies residues 680 to 702 (TGLVMRDSNNEASGTSLTRSSRS).

It belongs to the HAK/KUP transporter (TC 2.A.72.3) family. Expressed in roots and shoots.

The protein localises to the membrane. High-affinity potassium transporter. The polypeptide is Potassium transporter 7 (HAK7) (Oryza sativa subsp. japonica (Rice)).